Reading from the N-terminus, the 705-residue chain is Elongation factor G (705 aa).

One can recognise a tr-type G domain in the interval 8–291 (EKVRNIGIMA…AVVEYLPSPI (284 aa)). GTP contacts are provided by residues 17-24 (AHIDAGKT), 90-94 (DTPGH), and 144-147 (NKMD).

The protein belongs to the TRAFAC class translation factor GTPase superfamily. Classic translation factor GTPase family. EF-G/EF-2 subfamily.

The protein resides in the cytoplasm. Its function is as follows. Catalyzes the GTP-dependent ribosomal translocation step during translation elongation. During this step, the ribosome changes from the pre-translocational (PRE) to the post-translocational (POST) state as the newly formed A-site-bound peptidyl-tRNA and P-site-bound deacylated tRNA move to the P and E sites, respectively. Catalyzes the coordinated movement of the two tRNA molecules, the mRNA and conformational changes in the ribosome. In Chloroherpeton thalassium (strain ATCC 35110 / GB-78), this protein is Elongation factor G.